A 141-amino-acid polypeptide reads, in one-letter code: Large ribosomal subunit protein uL11c (141 aa).

It belongs to the universal ribosomal protein uL11 family. Part of the ribosomal stalk of the 50S ribosomal subunit. Interacts with L10 and the large rRNA to form the base of the stalk. L10 forms an elongated spine to which L12 dimers bind in a sequential fashion forming a multimeric L10(L12)X complex.

It is found in the plastid. The protein resides in the chloroplast. Functionally, forms part of the ribosomal stalk which helps the ribosome interact with GTP-bound translation factors. The sequence is that of Large ribosomal subunit protein uL11c from Trieres chinensis (Marine centric diatom).